Here is a 316-residue protein sequence, read N- to C-terminus: Methionyl-tRNA formyltransferase (316 aa).

117 to 120 is a binding site for (6S)-5,6,7,8-tetrahydrofolate; it reads SLLP.

The protein belongs to the Fmt family.

It carries out the reaction L-methionyl-tRNA(fMet) + (6R)-10-formyltetrahydrofolate = N-formyl-L-methionyl-tRNA(fMet) + (6S)-5,6,7,8-tetrahydrofolate + H(+). Attaches a formyl group to the free amino group of methionyl-tRNA(fMet). The formyl group appears to play a dual role in the initiator identity of N-formylmethionyl-tRNA by promoting its recognition by IF2 and preventing the misappropriation of this tRNA by the elongation apparatus. The protein is Methionyl-tRNA formyltransferase of Janthinobacterium sp. (strain Marseille) (Minibacterium massiliensis).